Reading from the N-terminus, the 271-residue chain is Putative phosphoenolpyruvate synthase regulatory protein (271 aa).

152-159 (GVSRCGKT) provides a ligand contact to ADP.

Belongs to the pyruvate, phosphate/water dikinase regulatory protein family. PSRP subfamily.

The catalysed reaction is [pyruvate, water dikinase] + ADP = [pyruvate, water dikinase]-phosphate + AMP + H(+). It carries out the reaction [pyruvate, water dikinase]-phosphate + phosphate + H(+) = [pyruvate, water dikinase] + diphosphate. Its function is as follows. Bifunctional serine/threonine kinase and phosphorylase involved in the regulation of the phosphoenolpyruvate synthase (PEPS) by catalyzing its phosphorylation/dephosphorylation. This is Putative phosphoenolpyruvate synthase regulatory protein from Legionella pneumophila (strain Paris).